Consider the following 212-residue polypeptide: Peroxisomal membrane protein 4 (212 aa).

N-linked (GlcNAc...) asparagine glycosylation occurs at Asn-57. Helical transmembrane passes span 97 to 117 (GKTY…LVFG) and 153 to 173 (WDPF…LFEY). Asn-206 is a glycosylation site (N-linked (GlcNAc...) asparagine).

The protein belongs to the peroxisomal membrane protein PXMP2/4 family. Interacts with PEX19. As to expression, expressed in normal prostate epithelial cells, and androgen-sensitive prostate adenocarcinoma cells. Not expressed in androgen-insensitive prostate adenocarcinoma cells.

It localises to the peroxisome membrane. The sequence is that of Peroxisomal membrane protein 4 (PXMP4) from Homo sapiens (Human).